The sequence spans 594 residues: Proteasome-associated ATPase (594 aa).

Residues 20–98 (DDLAAQVTYL…KEEIDRLAQP (79 aa)) adopt a coiled-coil conformation. 282–287 (GCGKTL) contacts ATP. Residues 593–594 (YL) are docks into pockets in the proteasome alpha-ring.

Belongs to the AAA ATPase family. In terms of assembly, homohexamer. Assembles into a hexameric ring structure that caps the 20S proteasome core. Strongly interacts with the prokaryotic ubiquitin-like protein Pup through a hydrophobic interface; the interacting region of ARC lies in its N-terminal coiled-coil domain. There is one Pup binding site per ARC hexamer ring. Upon ATP-binding, the C-terminus of ARC interacts with the alpha-rings of the proteasome core, possibly by binding to the intersubunit pockets.

It functions in the pathway protein degradation; proteasomal Pup-dependent pathway. Its function is as follows. ATPase which is responsible for recognizing, binding, unfolding and translocation of pupylated proteins into the bacterial 20S proteasome core particle. May be essential for opening the gate of the 20S proteasome via an interaction with its C-terminus, thereby allowing substrate entry and access to the site of proteolysis. Thus, the C-termini of the proteasomal ATPase may function like a 'key in a lock' to induce gate opening and therefore regulate proteolysis. The chain is Proteasome-associated ATPase from Catenulispora acidiphila (strain DSM 44928 / JCM 14897 / NBRC 102108 / NRRL B-24433 / ID139908).